The primary structure comprises 182 residues: MQMDWLFIAVISGIGLLSSGVPGTQGAYTTEQCRALNGSCNFYACFPKNVIIGKCDWWGWSCCARTPLERCTAKKGTCTKTGCTKTDTDHGPCDGGAQCCQRDPVKYCKFHGNVCGRGKCPMDHIPIGECTPGYPCCKRDGPAYCKSKGGKCLNRCPQIVPTNVIGVCATGVPCCKSRQSTG.

An N-terminal signal peptide occupies residues 1-26 (MQMDWLFIAVISGIGLLSSGVPGTQG). A C(6)C(4)C(9)C(6)CC 1; approximate repeat occupies 27–64 (AYTTEQCRALNGSCNFYACFPKNVIIGKCDWWGWSCCA). A C(6)C(4)C(9)C(6)CC 2; approximate repeat occupies 65 to 101 (RTPLERCTAKKGTCTKTGCTKTDTDHGPCDGGAQCCQ). One copy of the C(6)C(4)C(9)C(6)CC 3; approximate repeat lies at 102–138 (RDPVKYCKFHGNVCGRGKCPMDHIPIGECTPGYPCCK). Residues 139 to 176 (RDGPAYCKSKGGKCLNRCPQIVPTNVIGVCATGVPCCK) form a C(6)C(4)C(9)C(6)CC 4; approximate repeat.

This sequence belongs to the beta-defensin family. Helofensin subfamily. Expressed by the mandibular venom gland.

Its subcellular location is the secreted. Its function is as follows. Lethal toxin which possesses an inhibitory effect on direct electrical stimulation of the isolated hemi-diaphragm of mice. Neither hemorrhagic nor hemolytic activities are detected. Phospholipase A2 activity, proteolytic activity and arginine esterolytic activity are absent. The sequence is that of Helofensin-3 from Heloderma suspectum cinctum (Banded Gila monster).